The following is a 231-amino-acid chain: uncharacterized protein (231 aa).

The first 25 residues, 1–25 (MAKWVPALLLRRVPLFSLRFRPASS), serve as a signal peptide directing secretion. Residues 26–200 (TFLPVLAATE…SRPSPSATLT (175 aa)) are Extracellular-facing. Positions 39–64 (SVPSGDLSMPVKTRAEGEDDGFGEAG) are disordered. A helical membrane pass occupies residues 201–225 (LLLASSCLLAPAPPSFILLLFTLIA). Over 226 to 231 (PDLPHS) the chain is Cytoplasmic.

It localises to the membrane. This is an uncharacterized protein from Homo sapiens (Human).